The following is a 307-amino-acid chain: Aspartate carbamoyltransferase catalytic subunit (307 aa).

Residues arginine 54 and threonine 55 each coordinate carbamoyl phosphate. Residue lysine 83 participates in L-aspartate binding. Residues arginine 104, histidine 132, and glutamine 135 each contribute to the carbamoyl phosphate site. 2 residues coordinate L-aspartate: arginine 165 and arginine 228. Residues leucine 267 and proline 268 each coordinate carbamoyl phosphate.

It belongs to the aspartate/ornithine carbamoyltransferase superfamily. ATCase family. In terms of assembly, heterododecamer (2C3:3R2) of six catalytic PyrB chains organized as two trimers (C3), and six regulatory PyrI chains organized as three dimers (R2).

It catalyses the reaction carbamoyl phosphate + L-aspartate = N-carbamoyl-L-aspartate + phosphate + H(+). It participates in pyrimidine metabolism; UMP biosynthesis via de novo pathway; (S)-dihydroorotate from bicarbonate: step 2/3. Functionally, catalyzes the condensation of carbamoyl phosphate and aspartate to form carbamoyl aspartate and inorganic phosphate, the committed step in the de novo pyrimidine nucleotide biosynthesis pathway. In Clostridium botulinum (strain Eklund 17B / Type B), this protein is Aspartate carbamoyltransferase catalytic subunit.